We begin with the raw amino-acid sequence, 131 residues long: Large ribosomal subunit protein bL17 (131 aa).

Belongs to the bacterial ribosomal protein bL17 family. Part of the 50S ribosomal subunit. Contacts protein L32.

The protein is Large ribosomal subunit protein bL17 of Bordetella petrii (strain ATCC BAA-461 / DSM 12804 / CCUG 43448).